The primary structure comprises 114 residues: Protein LLP homolog (114 aa).

2 stretches are compositionally biased toward basic residues: residues 1-21 (MAKS…RKKN) and 91-108 (QRKK…KSKL). Disordered regions lie at residues 1–23 (MAKS…KNAP) and 91–114 (QRKK…GLAW).

This sequence belongs to the learning-associated protein family.

It is found in the nucleus. It localises to the nucleolus. The protein resides in the chromosome. In terms of biological role, regulates dendritic and spine growth and synaptic transmission. This chain is Protein LLP homolog (LLPH), found in Gallus gallus (Chicken).